A 246-amino-acid polypeptide reads, in one-letter code: tRNA pseudouridine synthase A (246 aa).

Aspartate 54 acts as the Nucleophile in catalysis. Tyrosine 112 is a substrate binding site.

The protein belongs to the tRNA pseudouridine synthase TruA family. In terms of assembly, homodimer.

It catalyses the reaction uridine(38/39/40) in tRNA = pseudouridine(38/39/40) in tRNA. Its function is as follows. Formation of pseudouridine at positions 38, 39 and 40 in the anticodon stem and loop of transfer RNAs. The chain is tRNA pseudouridine synthase A from Moorella thermoacetica (strain ATCC 39073 / JCM 9320).